Consider the following 145-residue polypeptide: Maximins 3/H9 type 1 (145 aa).

A signal peptide spans 1 to 18; it reads MNFKYIVAVSFLIASAYA. 2 propeptides span residues 19–43 and 74–124; these read RSVQNDEQSLSQRDVLEEEESLREI and RTAE…KEKR. Residue Ile144 is modified to Isoleucine amide.

It belongs to the bombinin family. As to expression, expressed by the skin glands.

The protein resides in the secreted. In terms of biological role, maximin-3 shows antibacterial activity against both Gram-positive and Gram-negative bacteria. It also shows antimicrobial activity against the fungus C.albicans, but not against A.flavus nor P.uticale. It has little hemolytic activity. It possess a significant cytotoxicity against tumor cell lines. It possess a significant anti-HIV activity. It shows high spermicidal activity. Maximin-H9 shows antimicrobial activity against bacteria and against the fungus C.albicans. Shows strong hemolytic activity. The chain is Maximins 3/H9 type 1 from Bombina maxima (Giant fire-bellied toad).